The following is a 230-amino-acid chain: Cytochrome c oxidase subunit 2 (230 aa).

Topologically, residues 1-14 are mitochondrial intermembrane; the sequence is MAYPLQLGFQDATS. The chain crosses the membrane as a helical span at residues 15-45; it reads PIMEELLHFHDHTLMIVFLISSLVLYIISTM. Topologically, residues 46–59 are mitochondrial matrix; that stretch reads LTTKLTHTNTMDAQ. A helical membrane pass occupies residues 60 to 87; the sequence is EVETIWTILPAIILILIALPSLRILYMM. Residues 88–230 are Mitochondrial intermembrane-facing; sequence DEINNPNLTI…NWTSSMMSTS (143 aa). Cu cation-binding residues include His-161, Cys-196, Glu-198, Cys-200, His-204, and Met-207. Glu-198 contributes to the Mg(2+) binding site. A Phosphotyrosine modification is found at Tyr-218.

The protein belongs to the cytochrome c oxidase subunit 2 family. In terms of assembly, component of the cytochrome c oxidase (complex IV, CIV), a multisubunit enzyme composed of 14 subunits. The complex is composed of a catalytic core of 3 subunits MT-CO1, MT-CO2 and MT-CO3, encoded in the mitochondrial DNA, and 11 supernumerary subunits COX4I, COX5A, COX5B, COX6A, COX6B, COX6C, COX7A, COX7B, COX7C, COX8 and NDUFA4, which are encoded in the nuclear genome. The complex exists as a monomer or a dimer and forms supercomplexes (SCs) in the inner mitochondrial membrane with NADH-ubiquinone oxidoreductase (complex I, CI) and ubiquinol-cytochrome c oxidoreductase (cytochrome b-c1 complex, complex III, CIII), resulting in different assemblies (supercomplex SCI(1)III(2)IV(1) and megacomplex MCI(2)III(2)IV(2)). Found in a complex with TMEM177, COA6, COX18, COX20, SCO1 and SCO2. Interacts with TMEM177 in a COX20-dependent manner. Interacts with COX20. Interacts with COX16. The cofactor is Cu cation.

The protein resides in the mitochondrion inner membrane. The catalysed reaction is 4 Fe(II)-[cytochrome c] + O2 + 8 H(+)(in) = 4 Fe(III)-[cytochrome c] + 2 H2O + 4 H(+)(out). Its function is as follows. Component of the cytochrome c oxidase, the last enzyme in the mitochondrial electron transport chain which drives oxidative phosphorylation. The respiratory chain contains 3 multisubunit complexes succinate dehydrogenase (complex II, CII), ubiquinol-cytochrome c oxidoreductase (cytochrome b-c1 complex, complex III, CIII) and cytochrome c oxidase (complex IV, CIV), that cooperate to transfer electrons derived from NADH and succinate to molecular oxygen, creating an electrochemical gradient over the inner membrane that drives transmembrane transport and the ATP synthase. Cytochrome c oxidase is the component of the respiratory chain that catalyzes the reduction of oxygen to water. Electrons originating from reduced cytochrome c in the intermembrane space (IMS) are transferred via the dinuclear copper A center (CU(A)) of subunit 2 and heme A of subunit 1 to the active site in subunit 1, a binuclear center (BNC) formed by heme A3 and copper B (CU(B)). The BNC reduces molecular oxygen to 2 water molecules using 4 electrons from cytochrome c in the IMS and 4 protons from the mitochondrial matrix. The chain is Cytochrome c oxidase subunit 2 (MT-CO2) from Ornithorhynchus anatinus (Duckbill platypus).